A 214-amino-acid chain; its full sequence is Ribonuclease HII (214 aa).

In terms of domain architecture, RNase H type-2 spans 27–214 (SVVAGIDEAG…SPIKQMCAIV (188 aa)). Positions 33, 34, and 126 each coordinate a divalent metal cation.

This sequence belongs to the RNase HII family. The cofactor is Mn(2+). Requires Mg(2+) as cofactor.

Its subcellular location is the cytoplasm. The catalysed reaction is Endonucleolytic cleavage to 5'-phosphomonoester.. Its function is as follows. Endonuclease that specifically degrades the RNA of RNA-DNA hybrids. This Chlamydia pneumoniae (Chlamydophila pneumoniae) protein is Ribonuclease HII (rnhB).